The chain runs to 330 residues: DNA-directed RNA polymerase subunit alpha (330 aa).

The segment at 1–236 (MQGSVTEFLK…EQLDAFVDLR (236 aa)) is alpha N-terminal domain (alpha-NTD). The segment at 250-330 (FDPILLRPVD…NWPPASIAED (81 aa)) is alpha C-terminal domain (alpha-CTD).

Belongs to the RNA polymerase alpha chain family. In terms of assembly, homodimer. The RNAP catalytic core consists of 2 alpha, 1 beta, 1 beta' and 1 omega subunit. When a sigma factor is associated with the core the holoenzyme is formed, which can initiate transcription.

It carries out the reaction RNA(n) + a ribonucleoside 5'-triphosphate = RNA(n+1) + diphosphate. In terms of biological role, DNA-dependent RNA polymerase catalyzes the transcription of DNA into RNA using the four ribonucleoside triphosphates as substrates. This chain is DNA-directed RNA polymerase subunit alpha, found in Vibrio parahaemolyticus serotype O3:K6 (strain RIMD 2210633).